Consider the following 462-residue polypeptide: Cysteine--tRNA ligase (462 aa).

Residue Cys30 participates in Zn(2+) binding. Residues Met32–His42 carry the 'HIGH' region motif. Zn(2+)-binding residues include Cys214, His239, and Glu243. The 'KMSKS' region signature appears at Lys271 to Ser275. Position 274 (Lys274) interacts with ATP.

The protein belongs to the class-I aminoacyl-tRNA synthetase family. Monomer. The cofactor is Zn(2+).

It is found in the cytoplasm. It catalyses the reaction tRNA(Cys) + L-cysteine + ATP = L-cysteinyl-tRNA(Cys) + AMP + diphosphate. This is Cysteine--tRNA ligase from Cupriavidus pinatubonensis (strain JMP 134 / LMG 1197) (Cupriavidus necator (strain JMP 134)).